The following is a 65-amino-acid chain: Small ribosomal subunit protein bS21 (65 aa).

Residues 43–52 (EKKRVKEALA) show a composition bias toward basic and acidic residues. Residues 43-65 (EKKRVKEALARKRSRKKARKEQD) are disordered. Basic residues predominate over residues 53 to 65 (RKRSRKKARKEQD).

The protein belongs to the bacterial ribosomal protein bS21 family.

The polypeptide is Small ribosomal subunit protein bS21 (Koribacter versatilis (strain Ellin345)).